A 161-amino-acid chain; its full sequence is Phosphopantetheine adenylyltransferase (161 aa).

Ser-9 lines the substrate pocket. ATP contacts are provided by residues 9–10 (SF) and His-17. Substrate-binding residues include Lys-41, Leu-73, and Lys-87. ATP contacts are provided by residues 88-90 (GLR), Glu-98, and 122-128 (YSFVSSS).

The protein belongs to the bacterial CoaD family. In terms of assembly, homohexamer. The cofactor is Mg(2+).

Its subcellular location is the cytoplasm. The catalysed reaction is (R)-4'-phosphopantetheine + ATP + H(+) = 3'-dephospho-CoA + diphosphate. It functions in the pathway cofactor biosynthesis; coenzyme A biosynthesis; CoA from (R)-pantothenate: step 4/5. Functionally, reversibly transfers an adenylyl group from ATP to 4'-phosphopantetheine, yielding dephospho-CoA (dPCoA) and pyrophosphate. This is Phosphopantetheine adenylyltransferase from Mycobacteroides abscessus (strain ATCC 19977 / DSM 44196 / CCUG 20993 / CIP 104536 / JCM 13569 / NCTC 13031 / TMC 1543 / L948) (Mycobacterium abscessus).